The primary structure comprises 642 residues: Acid beta-fructofuranosidase (642 aa).

The Cytoplasmic portion of the chain corresponds to 1 to 22 (MRNDSPYTPLLNASHNNHRRRE). Residues 1–95 (MRNDSPYTPL…LSGNLVGEGG (95 aa)) constitute a propeptide, removed in mature form. Residues 23 to 43 (LLLLFSGLLLLASIIAFSAYI) traverse the membrane as a helical; Signal-anchor for type II membrane protein segment. Over 44 to 642 (AQPHADADVS…YHPDQKRQTS (599 aa)) the chain is Lumenal. Residue Asn100 is glycosylated (N-linked (GlcNAc...) asparagine). Residues 119–122 (WMND), Gln138, Trp146, 181–182 (WT), and 245–246 (RD) each bind substrate. The active site involves Asp122. The N-linked (GlcNAc...) asparagine glycan is linked to Asn267. Residues Glu300 and Asp333 each coordinate substrate. A disulfide bridge connects residues Cys490 and Cys538. N-linked (GlcNAc...) asparagine glycans are attached at residues Asn491 and Asn615.

This sequence belongs to the glycosyl hydrolase 32 family. May be present in two forms, a 70 kDa monomer and a heterodimer of the 30 kDa and 38 kDa subunits. The ratio of the levels of the two forms within cells appears to be regulated developmentally.

The protein resides in the membrane. Its subcellular location is the vacuole. It is found in the vacuole lumen. The enzyme catalyses Hydrolysis of terminal non-reducing beta-D-fructofuranoside residues in beta-D-fructofuranosides.. Its pathway is glycan biosynthesis; sucrose metabolism. The sequence is that of Acid beta-fructofuranosidase (VCINV) from Vicia faba (Broad bean).